A 414-amino-acid chain; its full sequence is Peptide chain release factor subunit 1 (414 aa).

The protein belongs to the eukaryotic release factor 1 family. Heterodimer of two subunits, one of which binds GTP.

Its subcellular location is the cytoplasm. Functionally, directs the termination of nascent peptide synthesis (translation) in response to the termination codons UAA, UAG and UGA. This Methanococcoides burtonii (strain DSM 6242 / NBRC 107633 / OCM 468 / ACE-M) protein is Peptide chain release factor subunit 1.